A 126-amino-acid polypeptide reads, in one-letter code: Large ribosomal subunit protein bL21 (126 aa).

The disordered stretch occupies residues 105 to 126; sequence KKPSVGPRAKRTKAAPAAEAAE.

As to quaternary structure, contacts protein L20. Part of the 50S ribosomal subunit.

Its function is as follows. This protein binds to 23S rRNA in the presence of protein L20. In Rhodopseudomonas palustris (strain ATCC BAA-98 / CGA009), this protein is Large ribosomal subunit protein bL21.